Consider the following 212-residue polypeptide: Thymidylate kinase (212 aa).

Glycine 11–threonine 18 is a binding site for ATP.

The protein belongs to the thymidylate kinase family.

It carries out the reaction dTMP + ATP = dTDP + ADP. Phosphorylation of dTMP to form dTDP in both de novo and salvage pathways of dTTP synthesis. The chain is Thymidylate kinase from Buchnera aphidicola subsp. Schizaphis graminum (strain Sg).